Reading from the N-terminus, the 321-residue chain is MWRSWLREAHQSFERLPYESKQDRVVEDISKAIMSIKEAIFGEDEQSSSKEHAQGIASEACRVGLVSDLVTYLTVLDFETRKDVVQIFCAIIRITLEDGGRPGRDYVLAHPDVLSTLFYGYEDPEIALNCGQMFRECIRHEDIAKFVLECNLFEELFEKLNVQSFEVASDAFATFKDLLTRHKQLVAAFLQENYEDFFSQLDKLLTSDNYVTRRQSLKLLGELLLDRVNVKIMMQYVSDVNNLILMMNLLKDSSRSIQFEAFHVFKVFVANPNKTKPVADILVNNKNKLLTYLEDFHNDRDDEQFKEEKAVIIKEISMMHA.

Belongs to the Mo25 family.

The protein is Degreening-related gene dee76 protein (DEE76) of Auxenochlorella protothecoides (Green microalga).